The sequence spans 476 residues: MSMASFKSASKRISGTENVTRISANTAINSIVKKGELNVISLKDGNTADLEGINDVLLDYRRILKNEIKTAVSPITMKLKKDEHKKKLKLGTLKSITDKLRKLGGESSQPFIQFYKVQCMYIPLFSRVDGDNGEITVSLIDDGKEAAGQDPIIQSITFDASQMAMVELSMNFFVEKKDMDFIGIHVSAENVPVQDRAYGSINLAFFTNEQSVPMMQEEKKSSYLMIDAVNRPNDITKSSVFKSIGDRVSEEINQKRDDYKKKLIENEKLRRREGKGVKIETETRSSSSSDGETLLEEARKSVSLNISKFLADQRRAPPPPQLEKRTFQWPCGVKMLTMMDTGSSSHYFFSKNITPTSVEMNFGGVAQLEVERAKLSFETFGNKFLLKDVFMFSDQSLGDNILSYTLLKEEGHIDGMRTAGDDVLLEKDGEVVMILDSRDEGRMWIKDDVWAEVTEHGSKSAREYCMKVEKNEIKVE.

The span at 274–283 (GKGVKIETET) shows a compositional bias: basic and acidic residues. The segment at 274 to 294 (GKGVKIETETRSSSSSDGETL) is disordered.

This is an uncharacterized protein from Citrus psorosis virus (isolate Spain/P-121) (CPsV).